The chain runs to 445 residues: Tubulin beta-5 chain (445 aa).

GTP is bound by residues glutamine 11, glutamate 69, serine 138, glycine 142, threonine 143, glycine 144, asparagine 204, and asparagine 226. Glutamate 69 contacts Mg(2+). Residues 420-445 (AEYQQYQDATADDEYEEGEEEEEEAA) form a disordered region. A compositionally biased stretch (acidic residues) spans 429-445 (TADDEYEEGEEEEEEAA).

The protein belongs to the tubulin family. Dimer of alpha and beta chains. A typical microtubule is a hollow water-filled tube with an outer diameter of 25 nm and an inner diameter of 15 nM. Alpha-beta heterodimers associate head-to-tail to form protofilaments running lengthwise along the microtubule wall with the beta-tubulin subunit facing the microtubule plus end conferring a structural polarity. Microtubules usually have 13 protofilaments but different protofilament numbers can be found in some organisms and specialized cells. Requires Mg(2+) as cofactor.

The protein resides in the cytoplasm. The protein localises to the cytoskeleton. Functionally, tubulin is the major constituent of microtubules, a cylinder consisting of laterally associated linear protofilaments composed of alpha- and beta-tubulin heterodimers. Microtubules grow by the addition of GTP-tubulin dimers to the microtubule end, where a stabilizing cap forms. Below the cap, tubulin dimers are in GDP-bound state, owing to GTPase activity of alpha-tubulin. The protein is Tubulin beta-5 chain of Gossypium hirsutum (Upland cotton).